Reading from the N-terminus, the 549-residue chain is Hydroxylamine reductase (549 aa).

[4Fe-4S] cluster is bound by residues C5, C8, C17, and C23. Hybrid [4Fe-2O-2S] cluster-binding residues include H250, E274, C318, C404, C432, C457, E491, and K493. C404 carries the cysteine persulfide modification.

It belongs to the HCP family. It depends on [4Fe-4S] cluster as a cofactor. Hybrid [4Fe-2O-2S] cluster serves as cofactor.

Its subcellular location is the cytoplasm. The enzyme catalyses A + NH4(+) + H2O = hydroxylamine + AH2 + H(+). In terms of biological role, catalyzes the reduction of hydroxylamine to form NH(3) and H(2)O. The polypeptide is Hydroxylamine reductase (Geobacter metallireducens (strain ATCC 53774 / DSM 7210 / GS-15)).